The chain runs to 1275 residues: O-antigen biosynthesis protein RfbC (1275 aa).

In terms of biological role, involved in O-antigen biosynthesis. The sequence is that of O-antigen biosynthesis protein RfbC (rfbC) from Myxococcus xanthus.